A 341-amino-acid chain; its full sequence is Glyceraldehyde-3-phosphate dehydrogenase 2 (341 aa).

NAD(+) contacts are provided by residues 12-13 (RI), arginine 78, and threonine 120. D-glyceraldehyde 3-phosphate contacts are provided by residues 152 to 154 (SCT) and threonine 183. The active-site Nucleophile is cysteine 153. An NAD(+)-binding site is contributed by asparagine 184. D-glyceraldehyde 3-phosphate is bound by residues arginine 198, 211-212 (TG), and arginine 234. An NAD(+)-binding site is contributed by asparagine 313.

Belongs to the glyceraldehyde-3-phosphate dehydrogenase family. In terms of assembly, homotetramer.

Its subcellular location is the cytoplasm. It carries out the reaction D-glyceraldehyde 3-phosphate + phosphate + NAD(+) = (2R)-3-phospho-glyceroyl phosphate + NADH + H(+). The protein operates within carbohydrate degradation; glycolysis; pyruvate from D-glyceraldehyde 3-phosphate: step 1/5. Catalyzes the oxidative phosphorylation of glyceraldehyde 3-phosphate (G3P) to 1,3-bisphosphoglycerate (BPG) using the cofactor NAD. The first reaction step involves the formation of a hemiacetal intermediate between G3P and a cysteine residue, and this hemiacetal intermediate is then oxidized to a thioester, with concomitant reduction of NAD to NADH. The reduced NADH is then exchanged with the second NAD, and the thioester is attacked by a nucleophilic inorganic phosphate to produce BPG. The polypeptide is Glyceraldehyde-3-phosphate dehydrogenase 2 (gapA2) (Staphylococcus aureus (strain MRSA252)).